The primary structure comprises 161 residues: Phosphopantetheine adenylyltransferase (161 aa).

Ser-11 lines the substrate pocket. Residues 11–12 (SF) and His-19 each bind ATP. Substrate contacts are provided by Lys-43, Leu-75, and Arg-89. ATP is bound by residues 90-92 (GLR), Glu-100, and 125-131 (YSFISSS).

Belongs to the bacterial CoaD family. As to quaternary structure, homohexamer. Requires Mg(2+) as cofactor.

It is found in the cytoplasm. The catalysed reaction is (R)-4'-phosphopantetheine + ATP + H(+) = 3'-dephospho-CoA + diphosphate. The protein operates within cofactor biosynthesis; coenzyme A biosynthesis; CoA from (R)-pantothenate: step 4/5. Its function is as follows. Reversibly transfers an adenylyl group from ATP to 4'-phosphopantetheine, yielding dephospho-CoA (dPCoA) and pyrophosphate. The protein is Phosphopantetheine adenylyltransferase of Staphylococcus carnosus (strain TM300).